We begin with the raw amino-acid sequence, 284 residues long: Rhomboid-type serine protease 2 (284 aa).

A run of 6 helical transmembrane segments spans residues 17-37 (PPAL…IKSV), 66-86 (FHVN…PLAV), 98-118 (VTLN…GLIF), 124-141 (VIGL…MAYH), 160-180 (IKLY…ILFP), and 182-202 (SSLP…YGYI). Serine 128 acts as the Nucleophile in catalysis. The active site involves histidine 187.

This sequence belongs to the peptidase S54 family.

Its subcellular location is the golgi apparatus membrane. It localises to the golgi apparatus. The protein localises to the cis-Golgi network membrane. The catalysed reaction is Cleaves type-1 transmembrane domains using a catalytic dyad composed of serine and histidine that are contributed by different transmembrane domains.. Its function is as follows. Probable rhomboid-type serine protease that catalyzes intramembrane proteolysis. In Candida albicans (strain SC5314 / ATCC MYA-2876) (Yeast), this protein is Rhomboid-type serine protease 2 (RBD2).